The primary structure comprises 225 residues: UPF0758 protein Sez_1052 (225 aa).

Positions 102–224 (PVLSSAQVAE…YYSFREKSDL (123 aa)) constitute an MPN domain. The Zn(2+) site is built by His-173, His-175, and Asp-186. A JAMM motif motif is present at residues 173–186 (HNHPSGLTKPSAND).

The protein belongs to the UPF0758 family.

The protein is UPF0758 protein Sez_1052 of Streptococcus equi subsp. zooepidemicus (strain MGCS10565).